The chain runs to 136 residues: Large ribosomal subunit protein uL13 (136 aa).

It belongs to the universal ribosomal protein uL13 family. As to quaternary structure, part of the 50S ribosomal subunit.

Functionally, this protein is one of the early assembly proteins of the 50S ribosomal subunit, although it is not seen to bind rRNA by itself. It is important during the early stages of 50S assembly. This is Large ribosomal subunit protein uL13 from Thermoplasma acidophilum (strain ATCC 25905 / DSM 1728 / JCM 9062 / NBRC 15155 / AMRC-C165).